Consider the following 620-residue polypeptide: Dihydroxy-acid dehydratase (620 aa).

Aspartate 81 is a binding site for Mg(2+). Cysteine 122 lines the [2Fe-2S] cluster pocket. Residues aspartate 123 and lysine 124 each coordinate Mg(2+). The residue at position 124 (lysine 124) is an N6-carboxylysine. Cysteine 195 is a [2Fe-2S] cluster binding site. A Mg(2+)-binding site is contributed by glutamate 491. The active-site Proton acceptor is serine 517.

It belongs to the IlvD/Edd family. In terms of assembly, homodimer. [2Fe-2S] cluster is required as a cofactor. Mg(2+) serves as cofactor.

It catalyses the reaction (2R)-2,3-dihydroxy-3-methylbutanoate = 3-methyl-2-oxobutanoate + H2O. It carries out the reaction (2R,3R)-2,3-dihydroxy-3-methylpentanoate = (S)-3-methyl-2-oxopentanoate + H2O. The protein operates within amino-acid biosynthesis; L-isoleucine biosynthesis; L-isoleucine from 2-oxobutanoate: step 3/4. Its pathway is amino-acid biosynthesis; L-valine biosynthesis; L-valine from pyruvate: step 3/4. Its function is as follows. Functions in the biosynthesis of branched-chain amino acids. Catalyzes the dehydration of (2R,3R)-2,3-dihydroxy-3-methylpentanoate (2,3-dihydroxy-3-methylvalerate) into 2-oxo-3-methylpentanoate (2-oxo-3-methylvalerate) and of (2R)-2,3-dihydroxy-3-methylbutanoate (2,3-dihydroxyisovalerate) into 2-oxo-3-methylbutanoate (2-oxoisovalerate), the penultimate precursor to L-isoleucine and L-valine, respectively. The sequence is that of Dihydroxy-acid dehydratase from Colwellia psychrerythraea (strain 34H / ATCC BAA-681) (Vibrio psychroerythus).